The following is a 146-amino-acid chain: Gonadotropin subunit beta-2 (146 aa).

The N-terminal stretch at 1-28 (TGTPVKILVVRNILLLLFCLVVLLVFAQ) is a signal peptide. 6 cysteine pairs are disulfide-bonded: cysteine 35–cysteine 83, cysteine 49–cysteine 98, cysteine 52–cysteine 136, cysteine 60–cysteine 114, cysteine 64–cysteine 116, and cysteine 119–cysteine 126. N-linked (GlcNAc...) asparagine glycosylation occurs at asparagine 39.

It belongs to the glycoprotein hormones subunit beta family. Heterodimer of an alpha and a beta chain.

The protein resides in the secreted. In terms of biological role, involved in gametogenesis and steroidogenesis. This chain is Gonadotropin subunit beta-2 (cgbb), found in Ctenopharyngodon idella (Grass carp).